Consider the following 225-residue polypeptide: MSGKTELKPGRTKSRSAIVLAGGRGRRMGMVEKALLEFEGKTILERLLENLFRVVDEVILSVRDIPQKEKLLPVLEKFPDREIRFCFDSREDAGPLEGIRAGLLESRSEYSFVCAGDMPFVNSEIVDLLFEKANGHDAALPRWEEDRMYEPLHAVYSRKMLLEIEKTFEGERNSVLTPVFAMKDVVFVEVSEIRGIDPELRTFANINTVEDIESMIGSVVGKVEL.

Residues 20-22 (LAG), Lys33, Asp88, and Asp117 each bind GTP. A Mg(2+)-binding site is contributed by Asp117.

It belongs to the MobA family. Mg(2+) is required as a cofactor.

The protein localises to the cytoplasm. It catalyses the reaction Mo-molybdopterin + GTP + H(+) = Mo-molybdopterin guanine dinucleotide + diphosphate. Transfers a GMP moiety from GTP to Mo-molybdopterin (Mo-MPT) cofactor (Moco or molybdenum cofactor) to form Mo-molybdopterin guanine dinucleotide (Mo-MGD) cofactor. The sequence is that of Probable molybdenum cofactor guanylyltransferase from Methanosarcina acetivorans (strain ATCC 35395 / DSM 2834 / JCM 12185 / C2A).